The sequence spans 50 residues: Large ribosomal subunit protein bL33B (50 aa).

It belongs to the bacterial ribosomal protein bL33 family.

This chain is Large ribosomal subunit protein bL33B, found in Metamycoplasma arthritidis (strain 158L3-1) (Mycoplasma arthritidis).